Here is a 345-residue protein sequence, read N- to C-terminus: Membrane progestin receptor gamma-A (345 aa).

Over 1–52 the chain is Cytoplasmic; sequence MLNLIKLPQVFTINQVPKVFHEDGIISGYRHPCSSAKDCVLSLFQLTNETLN. Residues 53–73 form a helical membrane-spanning segment; sequence IWTHFLPTWFFLWKLLTVVLV. At 74 to 80 the chain is on the extracellular side; the sequence is LEDWRDP. Residues 81–101 form a helical membrane-spanning segment; that stretch reads FIWPFLVFLLSCCVYPLASSC. Residues 102-114 lie on the Cytoplasmic side of the membrane; the sequence is AHTFSTMSERARH. Residues 115–135 form a helical membrane-spanning segment; the sequence is ICFFFDYGALSFYSLGSAIIY. The Extracellular segment spans residues 136-148; the sequence is SSYSFPDKWVNGT. The chain crosses the membrane as a helical span at residues 149 to 169; the sequence is FHLNYVSIAVVNSIISTALAC. Residues 170–201 lie on the Cytoplasmic side of the membrane; the sequence is YSRLGLPFLEYNCHSIKRPSGKLDQKLCKCLR. A helical membrane pass occupies residues 202 to 222; that stretch reads IIAFVYPYLFDNIPLFYRIFV. Residues 223 to 272 are Extracellular-facing; that stretch reads CAGEGCTVNEANTVHYQHTSLAFFTGFLFATHLPERLAPGSFDYIGHSHQ. A helical membrane pass occupies residues 273-293; the sequence is LFHVFAIIGTYFQMTAIELDM. At 294-314 the chain is on the cytoplasmic side; the sequence is AARKQWLHAHLPPVTFLNTVG. The chain crosses the membrane as a helical span at residues 315-335; sequence AAFFSVVSGLCIVYVFSLSLF. At 336-345 the chain is on the extracellular side; the sequence is STRGVKNKSF.

The protein belongs to the ADIPOR family.

It is found in the membrane. Its function is as follows. Steroid membrane receptor. Binds progesterone. May be involved in oocyte maturation. The sequence is that of Membrane progestin receptor gamma-A (paqr5a) from Danio rerio (Zebrafish).